The sequence spans 78 residues: Toxin BmTxKS4 (78 aa).

The first 21 residues, 1 to 21 (MKLKISFLILVLFSVFFAIEG), serve as a signal peptide directing secretion. A propeptide spanning residues 22–32 (IIKWFPASVNG) is cleaved from the precursor.

Contains 3 disulfide bonds. Expressed by the venom gland.

Its subcellular location is the secreted. Its function is as follows. Reversibly inhibits potassium channels. The chain is Toxin BmTxKS4 from Olivierus martensii (Manchurian scorpion).